Consider the following 330-residue polypeptide: MKKIAVDAMGGDYAPQAIVEGVNQALSDFSDIEVQLYGDEAKIKQYLTATERVSIIHTDEKIDSDDEPTRAIRNKKNASMVLAAKAVKDGEADAVLSAGNTGALLAAGFFIVGRIKNIDRPGLMSTLPTVDGKGFDMLDLGANAENTAQHLHQYAVLGSFYAKNVRGIAQPRVGLLNNGTESSKGDPLRKETYELLVADESLNFIGNVEARDLMNGVADVVVADGFTGNAVLKSIEGTAMGIMGLLKTAITGGGLRAKLGALLLKDSLRGLKKQLNYSDIGGAVLFGVKAPVVKTHGSSDAKAVYSTIRQIRTMLETDVVAQTAREFSGE.

It belongs to the PlsX family. In terms of assembly, homodimer. Probably interacts with PlsY.

It is found in the cytoplasm. The catalysed reaction is a fatty acyl-[ACP] + phosphate = an acyl phosphate + holo-[ACP]. Its pathway is lipid metabolism; phospholipid metabolism. Catalyzes the reversible formation of acyl-phosphate (acyl-PO(4)) from acyl-[acyl-carrier-protein] (acyl-ACP). This enzyme utilizes acyl-ACP as fatty acyl donor, but not acyl-CoA. In Streptococcus pneumoniae (strain P1031), this protein is Phosphate acyltransferase.